A 190-amino-acid polypeptide reads, in one-letter code: Large ribosomal subunit protein uL10 (190 aa).

The protein belongs to the universal ribosomal protein uL10 family. As to quaternary structure, part of the ribosomal stalk of the 50S ribosomal subunit. The N-terminus interacts with L11 and the large rRNA to form the base of the stalk. The C-terminus forms an elongated spine to which L12 dimers bind in a sequential fashion forming a multimeric L10(L12)X complex.

Forms part of the ribosomal stalk, playing a central role in the interaction of the ribosome with GTP-bound translation factors. The chain is Large ribosomal subunit protein uL10 from Trichodesmium erythraeum (strain IMS101).